A 375-amino-acid polypeptide reads, in one-letter code: Carboxypeptidase O (375 aa).

A signal peptide spans 1-20 (MKPLLGTFYLLGMLVPGWLG). Residues 50 to 345 (RYHPMGEIYQ…EAVLSVLDDV (296 aa)) enclose the Peptidase M14 domain. Zn(2+)-binding residues include H109 and E112. An N-linked (GlcNAc...) asparagine glycan is attached at N175. Position 237 (H237) interacts with Zn(2+). An N-linked (GlcNAc...) asparagine glycan is attached at N252. The Proton donor/acceptor role is filled by E311. The N-linked (GlcNAc...) asparagine glycan is linked to N315. A lipid anchor (GPI-anchor amidated serine) is attached at S354. Positions 355-375 (ARKAKSTALVLGLLMSFMSLL) are cleaved as a propeptide — removed in mature form.

The protein belongs to the peptidase M14 family. Zn(2+) serves as cofactor.

The protein resides in the apical cell membrane. In terms of biological role, carboxypeptidase which preferentially cleaves C-terminal acidic residues from peptides and proteins. Can also cleave C-terminal hydrophobic amino acids, with a preference for small residues over large residues. This Bos taurus (Bovine) protein is Carboxypeptidase O.